The following is a 276-amino-acid chain: Carbonic anhydrase Nec1 (276 aa).

Positions 1–27 (MKMINSIFTHGSLIILLLLFHSISIKA) are cleaved as a signal peptide. Residues 34 to 270 (REFDYLEGSE…LNHREVQLHC (237 aa)) enclose the Alpha-carbonic anhydrase domain. Cys59 and Cys220 form a disulfide bridge. The active-site Proton acceptor is His98. Zn(2+)-binding residues include His124 and His126. N-linked (GlcNAc...) asparagine glycosylation is present at Asn134. His143 contacts Zn(2+). The segment at 216-217 (TT) is substrate binding.

Belongs to the alpha-class carbonic anhydrase family. As to quaternary structure, homodimer. Requires Zn(2+) as cofactor. As to expression, confined to nectaries.

It catalyses the reaction hydrogencarbonate + H(+) = CO2 + H2O. It participates in one-carbon metabolism. Its function is as follows. Involved in the production of blood-red nectar containing the alkaloid nesocodin and that serves as a visual attractant for pollinator visitation, including vertebrates such as Phelsuma geckos. The nectar is initially acidic and pale yellow, but slowly becomes alkaline before turning into red within 24 hours. Together with NEC2 and NEC3, facilitates the condensation of sinapaldehyde ((E)-3,5-dimethoxy-4-hydroxycinnamaldehyde) and proline to form nesocodin, a pigment with a stable imine bond. Mediates the alkalinization (pH increase) of the flower nectar by catalyzing the reversible hydration of carbon dioxide. This chain is Carbonic anhydrase Nec1, found in Nesocodon mauritianus (Blue Mauritius bellflower).